The sequence spans 204 residues: ATP-dependent Clp protease proteolytic subunit (204 aa).

Residue serine 102 is the Nucleophile of the active site. Residue histidine 127 is part of the active site.

Belongs to the peptidase S14 family. As to quaternary structure, fourteen ClpP subunits assemble into 2 heptameric rings which stack back to back to give a disk-like structure with a central cavity, resembling the structure of eukaryotic proteasomes.

It localises to the cytoplasm. The enzyme catalyses Hydrolysis of proteins to small peptides in the presence of ATP and magnesium. alpha-casein is the usual test substrate. In the absence of ATP, only oligopeptides shorter than five residues are hydrolyzed (such as succinyl-Leu-Tyr-|-NHMec, and Leu-Tyr-Leu-|-Tyr-Trp, in which cleavage of the -Tyr-|-Leu- and -Tyr-|-Trp bonds also occurs).. Functionally, cleaves peptides in various proteins in a process that requires ATP hydrolysis. Has a chymotrypsin-like activity. Plays a major role in the degradation of misfolded proteins. The chain is ATP-dependent Clp protease proteolytic subunit from Neisseria meningitidis serogroup A / serotype 4A (strain DSM 15465 / Z2491).